The following is a 499-amino-acid chain: CD-NTase-associated protein 4 (499 aa).

Residues 1-226 form an N-terminal endonuclease domain region; it reads MATSVLANWH…DFRFDGAARA (226 aa). Residues D49 and Q72 contribute to the active site. D49 serves as a coordination point for Mg(2+). I73 contacts Mg(2+). K74 is a catalytic residue. A C-terminal SAVED domain region spans residues 258 to 464; that stretch reads FRNVALRSFS…HIFSAAPNAV (207 aa).

Belongs to the Cap4 nuclease family. In terms of assembly, a monomer in the absence of ligand, in its presence it forms oligomers. It depends on Mg(2+) as a cofactor.

Its activity is regulated as follows. DNase activity is activated upon ligand binding (cAAG). Inhibited by EDTA. Effector DNase of a CBASS antivirus system. CBASS (cyclic oligonucleotide-based antiphage signaling system) provides immunity against bacteriophages. The CD-NTase protein (CdnD) synthesizes cyclic nucleotides in response to infection; these serve as specific second messenger signals. The signals activate a diverse range of effectors, leading to bacterial cell death and thus abortive phage infection. A type II-C(AAG) CBASS system. Functionally, binds second messenger 3',3',3'-cyclic AMP-AMP-GMP (cAAG). In the presence of cAAG (synthesized by the cognate CD-NTase protein in the CBASS operon), endonucleolytically degrades dsDNA to approximately 17 bp length fragments, with a preference for 5'-C|NG sites. Only binds DNA in the presence of cAAG. Not activated by c-di-AMP, c-di-GMP, 3',3'-cyclic GMP-AMP (cGAMP) or the second messenger of A.baumanii strain ATCC 27244. In terms of biological role, protects E.coli against phage T2 infection. When the cdnD-cap2-cap3-cap4 operon is introduced in E.coli there is a more than 10(3) decrease in the efficiency of T2 plaque formation. The operon does not protect against phage T5 and only about 10-fold against T7. Expression of cdnD-cap4 alone protects E.coli against phage T2 infection. This chain is CD-NTase-associated protein 4, found in Enterobacter hormaechei subsp. hoffmannii (strain UCI 50).